The primary structure comprises 365 residues: Flagellar P-ring protein (365 aa).

The first 22 residues, 1–22 (MSVRRFLVWILALTVGAAPVMA), serve as a signal peptide directing secretion.

It belongs to the FlgI family. The basal body constitutes a major portion of the flagellar organelle and consists of four rings (L,P,S, and M) mounted on a central rod.

It localises to the periplasm. The protein resides in the bacterial flagellum basal body. Functionally, assembles around the rod to form the L-ring and probably protects the motor/basal body from shearing forces during rotation. In Marinobacter nauticus (strain ATCC 700491 / DSM 11845 / VT8) (Marinobacter aquaeolei), this protein is Flagellar P-ring protein.